A 162-amino-acid chain; its full sequence is Selenoprotein F (162 aa).

The N-terminal stretch at 1-28 (MAAGQGGWLRPALGLRLLLATAFQAVSA) is a signal peptide. A non-standard amino acid (selenocysteine) is located at residue Sec-93.

The protein belongs to the selenoprotein M/F family. As to quaternary structure, forms a tight complex with UGGT1/UGCGL1. Interacts with UGGT2/UGCGL2. Interacts with RDH11.

The protein localises to the endoplasmic reticulum lumen. Functionally, may be involved in redox reactions associated with the formation of disulfide bonds. May contribute to the quality control of protein folding in the endoplasmic reticulum. May regulate protein folding by enhancing the catalytic activity of UGGT1/UGCGL1 and UGGT2/UGCGL2. This Mus musculus (Mouse) protein is Selenoprotein F.